Reading from the N-terminus, the 163-residue chain is NADH-quinone oxidoreductase subunit I (163 aa).

2 4Fe-4S ferredoxin-type domains span residues 54 to 84 (LRRY…IDSA) and 94 to 123 (TRYD…ETHI). [4Fe-4S] cluster is bound by residues Cys64, Cys67, Cys70, Cys74, Cys103, Cys106, Cys109, and Cys113.

The protein belongs to the complex I 23 kDa subunit family. NDH-1 is composed of 14 different subunits. Subunits NuoA, H, J, K, L, M, N constitute the membrane sector of the complex. Requires [4Fe-4S] cluster as cofactor.

It localises to the cell inner membrane. The enzyme catalyses a quinone + NADH + 5 H(+)(in) = a quinol + NAD(+) + 4 H(+)(out). NDH-1 shuttles electrons from NADH, via FMN and iron-sulfur (Fe-S) centers, to quinones in the respiratory chain. The immediate electron acceptor for the enzyme in this species is believed to be ubiquinone. Couples the redox reaction to proton translocation (for every two electrons transferred, four hydrogen ions are translocated across the cytoplasmic membrane), and thus conserves the redox energy in a proton gradient. The sequence is that of NADH-quinone oxidoreductase subunit I from Xylella fastidiosa (strain 9a5c).